We begin with the raw amino-acid sequence, 400 residues long: Acetylornithine aminotransferase (400 aa).

Pyridoxal 5'-phosphate is bound by residues G113–A114 and F139. Residue R142 participates in N(2)-acetyl-L-ornithine binding. D224–Q227 serves as a coordination point for pyridoxal 5'-phosphate. K253 bears the N6-(pyridoxal phosphate)lysine mark. Residue S281 participates in N(2)-acetyl-L-ornithine binding. T282 lines the pyridoxal 5'-phosphate pocket.

Belongs to the class-III pyridoxal-phosphate-dependent aminotransferase family. ArgD subfamily. As to quaternary structure, homodimer. It depends on pyridoxal 5'-phosphate as a cofactor.

The protein localises to the cytoplasm. The enzyme catalyses N(2)-acetyl-L-ornithine + 2-oxoglutarate = N-acetyl-L-glutamate 5-semialdehyde + L-glutamate. It participates in amino-acid biosynthesis; L-arginine biosynthesis; N(2)-acetyl-L-ornithine from L-glutamate: step 4/4. The polypeptide is Acetylornithine aminotransferase (Mycobacterium bovis (strain ATCC BAA-935 / AF2122/97)).